A 385-amino-acid polypeptide reads, in one-letter code: Decapping nuclease RAI1 (385 aa).

Glu-173 contributes to the a divalent metal cation binding site. Residue Glu-222 coordinates substrate. 3 residues coordinate a divalent metal cation: Asp-224, Glu-243, and Leu-244. Substrate contacts are provided by Lys-245 and Gln-269.

The protein belongs to the DXO/Dom3Z family. As to quaternary structure, interacts with RAT1; the interaction is direct, stabilizes RAT1 protein structure and stimulates its exoribonuclease activity. The interaction also stimulates RAI1 pyrophosphohydrolase activity, probably by recruiting it to mRNA substrates. A divalent metal cation serves as cofactor.

Its subcellular location is the nucleus. The enzyme catalyses a 5'-end NAD(+)-phospho-ribonucleoside in mRNA + H2O = a 5'-end phospho-ribonucleoside in mRNA + NAD(+) + H(+). It carries out the reaction a 5'-end (N(7)-methyl 5'-triphosphoguanosine)-ribonucleoside-ribonucleotide in mRNA + H2O = a (N(7)-methyl 5'-triphosphoguanosine)-nucleoside + a 5'-end phospho-ribonucleoside in mRNA + H(+). The catalysed reaction is a 5'-end triphospho-ribonucleoside in mRNA + H2O = a 5'-end phospho-ribonucleoside in mRNA + diphosphate + H(+). Its function is as follows. Decapping enzyme for NAD-capped RNAs: specifically hydrolyzes the nicotinamide adenine dinucleotide (NAD) cap from a subset of RNAs by removing the entire NAD moiety from the 5'-end of an NAD-capped RNA. The NAD-cap is present at the 5'-end of some RNAs and snoRNAs. In contrast to the canonical 5'-end N7 methylguanosine (m7G) cap, the NAD cap promotes mRNA decay. Also acts as a non-canonical decapping enzyme that removes the entire cap structure of m7G capped or incompletely capped RNAs. Has decapping activity toward incomplete 5'-end m7G cap mRNAs such as unmethylated 5'-end-capped RNA (cap0), while it has no activity toward 2'-O-ribose methylated m7G cap (cap1). Also possesses RNA 5'-pyrophosphohydrolase activity by hydrolyzing the 5'-end triphosphate to release pyrophosphates. Stimulates exoribonuclease activity of Rat1, allowing it to degrade RNAs with stable secondary structure more effectively. This chain is Decapping nuclease RAI1 (RAI1), found in Debaryomyces hansenii (strain ATCC 36239 / CBS 767 / BCRC 21394 / JCM 1990 / NBRC 0083 / IGC 2968) (Yeast).